We begin with the raw amino-acid sequence, 268 residues long: MEYTLQTLVFCSFKGGTGKTTLSLNVGCNLAQFLGKRVLLIDLDPQSNLSSGLGASIEGNHKGLHEVMCASNDLKSIICKTKKTGVDIIPASFLSEQFREFSTNGIPSSNLRLFLDEYCSPLYDVCIVDTPPSLGGLTKEAFIAGDKLIVCLIPEPFSILGLQKIREFLISIGKPEEEHILGVALSFWDDRSSTNQTYIDIIESIYENKIFSTKIRRDISLSRSLLKEDSVINVYPTSRAATDILNLTHEISALLNSKHKQDFSQRTL.

Position 13–20 (13–20 (FKGGTGKT)) interacts with ATP.

It belongs to the ParA family.

This Chlamydia muridarum (strain MoPn / Nigg) protein is Virulence plasmid ParA family protein pGP5-D.